The sequence spans 197 residues: Peptidyl-tRNA hydrolase (197 aa).

Tyr-23 contacts tRNA. His-28 serves as the catalytic Proton acceptor. 3 residues coordinate tRNA: Phe-73, Asn-75, and Asn-121.

The protein belongs to the PTH family. As to quaternary structure, monomer.

The protein resides in the cytoplasm. The enzyme catalyses an N-acyl-L-alpha-aminoacyl-tRNA + H2O = an N-acyl-L-amino acid + a tRNA + H(+). Functionally, hydrolyzes ribosome-free peptidyl-tRNAs (with 1 or more amino acids incorporated), which drop off the ribosome during protein synthesis, or as a result of ribosome stalling. Its function is as follows. Catalyzes the release of premature peptidyl moieties from peptidyl-tRNA molecules trapped in stalled 50S ribosomal subunits, and thus maintains levels of free tRNAs and 50S ribosomes. The protein is Peptidyl-tRNA hydrolase of Frankia casuarinae (strain DSM 45818 / CECT 9043 / HFP020203 / CcI3).